Here is a 603-residue protein sequence, read N- to C-terminus: MLVMSHVLAAVAWPYANGPRHIGHVSGFGVPSDVFARYMRMAGHDVLMVSGTDEHGTPIQVQADAEGVTPRELADRYNRVIVADLHGLGLTYDLFTRTTTGNHYAVVQELFEGMYRNGYIVSKTTMGAISPSTGRTLPDRYIEGTCPICGYESARGDQCDSCGNQLDPIDLRNPKSKINGETPKFVETEHFFLDLPALAGVLGQWLDTREGWRPNVLRFSKNLLDDLQPRAITRDLEWGVPIPLDGWRERGDKRIYVWFDAVIGYLSASIEWARRSGDPQAWRRWWSADGPGKDAPSHYFMGKDNIVFHSVIWPALLAGYSGEGSHDGQPGELGRLNLPTEVVSSEFLTMEGRKFSSSRRVVIYVRDFLERYDADALRYFIAVAGPESNDTDFTWAEFLRRNNDELVAGWGNLVNRSISMAAKNFGAIPPVDPAGLTEADETLLAVARAGFDTVGELIGRHRQKQAIGEAMKVVAEANRYLSEQAPWKLKGEADRPRMGTVLHVALQVVSDANTLLTPFLPHSAQKIHQLLGGTGVHAPMPVIEEVEDLDGGPAYPVLTGDYTVGARWESVPLAVGRALDPPKPVFRKLDPSIVDEELARLAG.

The 'HIGH' region motif lies at Pro-14 to His-24. Cys-146, Cys-149, Cys-159, and Cys-162 together coordinate Zn(2+). The 'KMSKS' region signature appears at Lys-354–Ser-358. Ser-357 serves as a coordination point for ATP.

The protein belongs to the class-I aminoacyl-tRNA synthetase family. MetG type 1 subfamily. Monomer. Zn(2+) is required as a cofactor.

The protein resides in the cytoplasm. The enzyme catalyses tRNA(Met) + L-methionine + ATP = L-methionyl-tRNA(Met) + AMP + diphosphate. In terms of biological role, is required not only for elongation of protein synthesis but also for the initiation of all mRNA translation through initiator tRNA(fMet) aminoacylation. In Salinispora tropica (strain ATCC BAA-916 / DSM 44818 / JCM 13857 / NBRC 105044 / CNB-440), this protein is Methionine--tRNA ligase.